The following is a 582-amino-acid chain: Spermatogenesis-associated protein 7 homolog (582 aa).

Disordered stretches follow at residues 167–192 (LMSGTQKHASTSPSRHSGCGHGCDRR) and 251–289 (RKDFSDQRMEAETQTELSSFNSELGTAEKTSSKDSEVNI). Composition is skewed to polar residues over residues 169-181 (SGTQKHASTSPSR) and 262-274 (ETQTELSSFNSEL).

As to quaternary structure, found in a complex with CFAP410, NEK1 and SPATA7. Interacts with NEK1. Interacts with RPGRIP1. Interacts with RPGR. Interacts with NPHP4. Interacts with NPHP1. Interacts with AHI1. As to expression, expressed in the retina (at protein level). Expressed in the choroid region and retinal pigment endothelium, within the photoreceptor layer (at protein level).

It is found in the cytoplasm. The protein localises to the cytoskeleton. Its subcellular location is the cilium axoneme. The protein resides in the cilium basal body. It localises to the cell projection. It is found in the cilium. The protein localises to the photoreceptor outer segment. In terms of biological role, involved in the maintenance of both rod and cone photoreceptor cells. Required for photoreceptor-specific localization of proximal connecting cilium (CC) proteins RPGR, AHI1, NPHP1, NPHP4, and RPGRIP1 at the distal CC, a photoreceptor-specific extension of the primary cilium transition zone. Maintenance of protein localization at the photoreceptor-specific distal CC is essential for normal microtubule stability and to prevent photoreceptor degeneration. The sequence is that of Spermatogenesis-associated protein 7 homolog (Spata7) from Mus musculus (Mouse).